The following is a 306-amino-acid chain: Palmitoyl-protein thioesterase 1 (306 aa).

The signal sequence occupies residues Met-1–Leu-27. 3 disulfide bridges follow: Cys-45-Cys-46, Cys-96-Cys-128, and Cys-152-Cys-160. The active site involves Ser-115. N-linked (GlcNAc...) asparagine glycosylation is found at Asn-197, Asn-212, and Asn-232. Residues Asp-233 and His-289 contribute to the active site.

Belongs to the palmitoyl-protein thioesterase family. In terms of assembly, interacts with CLN5, ATP5F1A and ATP5F1B. Post-translationally, glycosylated. Spleen, brain, seminal vesicle, and testis. Lower levels of activity in liver, heart, lung, and skeletal muscle.

It is found in the lysosome. It localises to the secreted. Its subcellular location is the golgi apparatus. The protein resides in the endoplasmic reticulum. It carries out the reaction S-hexadecanoyl-L-cysteinyl-[protein] + H2O = L-cysteinyl-[protein] + hexadecanoate + H(+). It catalyses the reaction hexadecanoyl-CoA + H2O = hexadecanoate + CoA + H(+). The enzyme catalyses S-hexadecanoyl-N-acetylcysteamine + H2O = N-acetylcysteamine + hexadecanoate + H(+). The catalysed reaction is S-hexadecanoyl-N-acetylcysteine methyl ester + H2O = N-acetylcysteine methyl ester + hexadecanoate + H(+). With respect to regulation, palmitoylation reduces PPT1 enzymatic activity. Has thioesterase activity against fatty acid thioesters with 14 -18 carbons, including palmitoyl-CoA, S-palmitoyl-N-acetylcysteamine, and palmitoylated proteins. In contrast to PPT2, PPT1 can hydrolyze palmitoylated proteins and palmitoylcysteine. The chain is Palmitoyl-protein thioesterase 1 (PPT1) from Bos taurus (Bovine).